The sequence spans 469 residues: MRNGTSANGTTGHAPIARRLFGTDGVRGVANVHPMTAEMALQLGRALAYVVRNGSHRHRIVIGKDTRLSGYMLEQAIASGISSMGVDVMLSGPLPTPGIAFLTESMRADAGVVISASHNPYQDNGIKFFSRDGFKLPDAVELQIEQLVLGESGLEEFHALRPTATRIGKAKRIDDAIGRYVVFLKSIFPKDLTLDGLTIVVDCAHGAAYHVAPAVFEELGAKVIALNVKPDGKNINDGCGAVHPESMAKAIQKHRAHLGLALDGDADRVILADEQGRIVDGDAIMALVGRDLIRQKTLAKRTVVATVMSNLGLERALAGAGGRVVRTAVGDRYVVEEMRRSGYNFGGEQSGHLIFLDHVTTGDGVAAALNVLAVMQREGRPLSELARCFEPVPQALVNVAVKERRPLSDLPEVARVIGSVEKALGKDGRVLVRFSGTENKVRVLVEGTDGKRIRAQADEIADELRKALG.

Catalysis depends on Ser117, which acts as the Phosphoserine intermediate. Residues Ser117, Asp263, Asp265, and Asp267 each contribute to the Mg(2+) site. Residue Ser117 is modified to Phosphoserine.

Belongs to the phosphohexose mutase family. The cofactor is Mg(2+). In terms of processing, activated by phosphorylation.

It catalyses the reaction alpha-D-glucosamine 1-phosphate = D-glucosamine 6-phosphate. In terms of biological role, catalyzes the conversion of glucosamine-6-phosphate to glucosamine-1-phosphate. The sequence is that of Phosphoglucosamine mutase from Anaeromyxobacter sp. (strain Fw109-5).